Here is a 682-residue protein sequence, read N- to C-terminus: Probable glycosyl transferase Gly (682 aa).

UDP is bound by residues 21-26 and 112-113; these read CASFSD and DC. 3 residues coordinate Mn(2+): Asp-112, Asp-114, and His-230. 230-236 serves as a coordination point for UDP; the sequence is HYLPERK.

This sequence belongs to the glycosyltransferase 8 family. In terms of assembly, part of the accessory SecA2/SecY2 protein translocation apparatus required to export cell wall protein GspB.

In terms of biological role, part of the accessory SecA2/SecY2 system specifically required to export GspB, a serine-rich repeat cell wall protein encoded upstream in the same operon. This chain is Probable glycosyl transferase Gly (gly), found in Streptococcus gordonii.